Consider the following 220-residue polypeptide: Probable nicotinate-nucleotide adenylyltransferase (220 aa).

Belongs to the NadD family.

It catalyses the reaction nicotinate beta-D-ribonucleotide + ATP + H(+) = deamido-NAD(+) + diphosphate. Its pathway is cofactor biosynthesis; NAD(+) biosynthesis; deamido-NAD(+) from nicotinate D-ribonucleotide: step 1/1. Its function is as follows. Catalyzes the reversible adenylation of nicotinate mononucleotide (NaMN) to nicotinic acid adenine dinucleotide (NaAD). This chain is Probable nicotinate-nucleotide adenylyltransferase, found in Saccharophagus degradans (strain 2-40 / ATCC 43961 / DSM 17024).